We begin with the raw amino-acid sequence, 300 residues long: Tumor necrosis factor receptor superfamily member 6B (300 aa).

The N-terminal stretch at 1–29 (MRALEGPGLSLLCLVLALPALLPVPAVRG) is a signal peptide. 4 TNFR-Cys repeats span residues 31-70 (AETP…PTTC), 72-113 (PCPP…NRAC), 115-150 (CRTG…NTQC), and 152-193 (PCPP…DTLC). Disulfide bonds link Cys-49-Cys-62, Cys-52-Cys-70, Cys-73-Cys-88, Cys-91-Cys-105, Cys-95-Cys-113, Cys-115-Cys-126, Cys-132-Cys-150, and Cys-153-Cys-168. A glycan (N-linked (GlcNAc...) asparagine) is linked at Asn-173. Cys-174 and Cys-193 form a disulfide bridge.

In terms of tissue distribution, detected in fetal lung, brain and liver. Detected in adult stomach, spinal cord, lymph node, trachea, spleen, colon and lung. Highly expressed in several primary tumors from colon, stomach, rectum, esophagus and in SW480 colon carcinoma cells.

The protein localises to the secreted. Functionally, decoy receptor that can neutralize the cytotoxic ligands TNFS14/LIGHT, TNFSF15 and TNFSF6/FASL. Protects against apoptosis. The sequence is that of Tumor necrosis factor receptor superfamily member 6B (TNFRSF6B) from Homo sapiens (Human).